The primary structure comprises 412 residues: Probable cystathionine gamma-synthase 2 (412 aa).

7 residues coordinate pyridoxal 5'-phosphate: Tyr-76, Arg-78, Gly-106, Met-107, Tyr-131, Ser-226, and Thr-228. Residue Lys-229 is modified to N6-(pyridoxal phosphate)lysine.

This sequence belongs to the trans-sulfuration enzymes family. It depends on pyridoxal 5'-phosphate as a cofactor.

It carries out the reaction O-phospho-L-homoserine + L-cysteine = L,L-cystathionine + phosphate. It catalyses the reaction O-succinyl-L-homoserine + L-cysteine = L,L-cystathionine + succinate + H(+). It participates in amino-acid biosynthesis; L-methionine biosynthesis via de novo pathway; L-cystathionine from O-succinyl-L-homoserine: step 1/1. Its function is as follows. Catalyzes the first committed step of methionine (Met) biosynthesis. Catalyzes the formation of L-cystathionine from homoserine esters and L-cysteine, via a gamma-replacement reaction. This Arabidopsis thaliana (Mouse-ear cress) protein is Probable cystathionine gamma-synthase 2.